A 188-amino-acid polypeptide reads, in one-letter code: Elongation factor P (188 aa).

This sequence belongs to the elongation factor P family.

It localises to the cytoplasm. The protein operates within protein biosynthesis; polypeptide chain elongation. Involved in peptide bond synthesis. Stimulates efficient translation and peptide-bond synthesis on native or reconstituted 70S ribosomes in vitro. Probably functions indirectly by altering the affinity of the ribosome for aminoacyl-tRNA, thus increasing their reactivity as acceptors for peptidyl transferase. This is Elongation factor P from Malacoplasma penetrans (strain HF-2) (Mycoplasma penetrans).